Reading from the N-terminus, the 520-residue chain is Ribonuclease Y (520 aa).

A helical membrane pass occupies residues 1 to 21 (MEILIIVIAAVVGLALGFAIA). The KH domain maps to 210–295 (CVSVFNLESD…EVVKKTRKQI (86 aa)). The HD domain occupies 336–429 (LLQHSREVAK…VQVCDAISGA (94 aa)).

This sequence belongs to the RNase Y family.

The protein localises to the cell membrane. Endoribonuclease that initiates mRNA decay. This is Ribonuclease Y from Christiangramia forsetii (strain DSM 17595 / CGMCC 1.15422 / KT0803) (Gramella forsetii).